A 142-amino-acid polypeptide reads, in one-letter code: Large ribosomal subunit protein uL13 (142 aa).

It belongs to the universal ribosomal protein uL13 family. As to quaternary structure, part of the 50S ribosomal subunit.

In terms of biological role, this protein is one of the early assembly proteins of the 50S ribosomal subunit, although it is not seen to bind rRNA by itself. It is important during the early stages of 50S assembly. This Pelobacter propionicus (strain DSM 2379 / NBRC 103807 / OttBd1) protein is Large ribosomal subunit protein uL13.